The primary structure comprises 79 residues: D-alanyl carrier protein (79 aa).

The Carrier domain maps to 1–76 (MKEQIFDIIE…KIAARVQEKT (76 aa)). O-(pantetheine 4'-phosphoryl)serine is present on Ser34.

Belongs to the DltC family. In terms of processing, 4'-phosphopantetheine is transferred from CoA to a specific serine of apo-DCP.

The protein resides in the cytoplasm. It participates in cell wall biogenesis; lipoteichoic acid biosynthesis. Carrier protein involved in the D-alanylation of lipoteichoic acid (LTA). The loading of thioester-linked D-alanine onto DltC is catalyzed by D-alanine--D-alanyl carrier protein ligase DltA. The DltC-carried D-alanyl group is further transferred to cell membrane phosphatidylglycerol (PG) by forming an ester bond, probably catalyzed by DltD. D-alanylation of LTA plays an important role in modulating the properties of the cell wall in Gram-positive bacteria, influencing the net charge of the cell wall. In Lactococcus lactis subsp. cremoris (strain SK11), this protein is D-alanyl carrier protein.